The primary structure comprises 173 residues: Co-chaperone protein HscB homolog (173 aa).

Residues 3-75 enclose the J domain; the sequence is NPFALFDLPI…ILRADCIIAL (73 aa).

Belongs to the HscB family. Interacts with HscA and stimulates its ATPase activity.

In terms of biological role, co-chaperone involved in the maturation of iron-sulfur cluster-containing proteins. Seems to help targeting proteins to be folded toward HscA. The polypeptide is Co-chaperone protein HscB homolog (Mannheimia succiniciproducens (strain KCTC 0769BP / MBEL55E)).